The chain runs to 319 residues: MSDSIQERYLVGYALAAKKQHSFIQPSLIEHSRQRGIDLVKLDPTKSLLEQGKLDCIIHKLYDVYWKENLHEFREKCPGVPVIDLPEAIERLHNRVSMLEVITQLRFPVSDSERFGVPEQVVVMDSSVLSGGGALGELKFPVIAKPLDADGSAKSHKMFLIYDQEGMKILKAPIVLQEFVNHGGVIFKVYVVGDHVKCVKRRSLPDISEEKIGTSKGSLPFSQISNLTAQEDKNIEYGEDRSLEKVEMPPLSFLTDLAKAMRESMGLNLFNFDVIRDAKDANRYLIIDINYFPGYAKMPSYEPVLTEFFWDMVTKKNHV.

Ser2 is modified (N-acetylserine). 1D-myo-inositol 1,3,4-trisphosphate-binding residues include Lys18 and Lys60. Residues Arg95 and Lys145 each coordinate ATP. One can recognise an ATP-grasp domain in the interval 99-318 (LEVITQLRFP…FWDMVTKKNH (220 aa)). His156 and Lys188 together coordinate 1D-myo-inositol 1,3,4-trisphosphate. ATP contacts are provided by residues 177–188 (QEFVNHGGVIFK) and Ser203. Residues Asp273, Asp288, and Asn290 each coordinate Mg(2+). Position 290 (Asn290) interacts with 1D-myo-inositol 1,3,4-trisphosphate.

It belongs to the ITPK1 family. As to quaternary structure, monomer. Mg(2+) serves as cofactor. As to expression, expressed in siliques.

The enzyme catalyses 1D-myo-inositol 3,4,5,6-tetrakisphosphate + ATP = 1D-myo-inositol 1,3,4,5,6-pentakisphosphate + ADP + H(+). It carries out the reaction 1D-myo-inositol 1,3,4-trisphosphate + ATP = 1D-myo-inositol 1,3,4,5-tetrakisphosphate + ADP + H(+). It catalyses the reaction 1D-myo-inositol 1,3,4-trisphosphate + ATP = 1D-myo-inositol 1,3,4,6-tetrakisphosphate + ADP + H(+). Functionally, kinase that can phosphorylate various inositol polyphosphate such as Ins(3,4,5,6)P4 or Ins(1,3,4)P3. Phosphorylates Ins(3,4,5,6)P4 at position 1 to form Ins(1,3,4,5,6)P5. This reaction is thought to have regulatory importance, since Ins(3,4,5,6)P4 is an inhibitor of plasma membrane Ca(2+)-activated Cl(-) channels, while Ins(1,3,4,5,6)P5 is not. Also phosphorylates Ins(1,3,4)P3 on O-5 and O-6 to form Ins(1,3,4,6)P4, an essential molecule in the hexakisphosphate (InsP6) pathway. The protein is Inositol-tetrakisphosphate 1-kinase 1 (ITPK1) of Arabidopsis thaliana (Mouse-ear cress).